Reading from the N-terminus, the 501-residue chain is Growth/differentiation factor 5 (501 aa).

The signal sequence occupies residues 1–27 (MRLPKLLTFLLWYLAWLDLEFICTVLG). Residues 28–381 (APDLGQRPQG…YLFSQRRKRR (354 aa)) constitute a propeptide that is removed on maturation. Positions 29–169 (PDLGQRPQGT…EPFRPPPITP (141 aa)) are disordered. Over residues 99–111 (PRPGGPEPKPGHP) the composition is skewed to pro residues. The segment covering 148–162 (KAREPGPPREPKEPF) has biased composition (basic and acidic residues). An N-linked (GlcNAc...) asparagine glycan is attached at asparagine 189. A disordered region spans residues 246 to 265 (PSDTAKPAAPGGGRAAQLKL). Intrachain disulfides connect cysteine 400–cysteine 466, cysteine 429–cysteine 498, and cysteine 433–cysteine 500.

It belongs to the TGF-beta family. In terms of assembly, homodimer; disulfide-linked. Interacts with serine proteases, HTRA1 and HTRA3. Following LPS binding, may form a complex with CXCR4, HSP90AA1 and HSPA8. Interacts with high affinity with NOG; inhibits chondrogenesis. Interacts with high affinity with BMPR1B and lower affinity with BMPR1A; positively regulates chondrocyte differentiation and induces SMAD dependent signaling. Interacts with FBN1 (via N-terminal domain) and FBN2. Interacts with TGFBR3. In terms of tissue distribution, predominantly expressed in long bones during embryonic development. Expressed in monocytes (at protein level).

The protein resides in the secreted. Its subcellular location is the cell membrane. Its function is as follows. Growth factor involved in bone and cartilage formation. During cartilage development regulates differentiation of chondrogenic tissue through two pathways. Firstly, positively regulates differentiation of chondrogenic tissue through its binding of high affinity with BMPR1B and of less affinity with BMPR1A, leading to induction of SMAD1-SMAD5-SMAD8 complex phosphorylation and then SMAD protein signaling transduction. Secondly, negatively regulates chondrogenic differentiation through its interaction with NOG. Required to prevent excessive muscle loss upon denervation. This function requires SMAD4 and is mediated by phosphorylated SMAD1/5/8. Binds bacterial lipopolysaccharide (LPS) and mediates LPS-induced inflammatory response, including TNF secretion by monocytes. The protein is Growth/differentiation factor 5 (GDF5) of Homo sapiens (Human).